A 380-amino-acid chain; its full sequence is Glucose-1-phosphate adenylyltransferase (380 aa).

Alpha-D-glucose 1-phosphate is bound by residues Gly-164, 179-180 (EK), and Ser-190.

It belongs to the bacterial/plant glucose-1-phosphate adenylyltransferase family. As to quaternary structure, homotetramer.

It carries out the reaction alpha-D-glucose 1-phosphate + ATP + H(+) = ADP-alpha-D-glucose + diphosphate. It participates in glycan biosynthesis; glycogen biosynthesis. In terms of biological role, involved in the biosynthesis of ADP-glucose, a building block required for the elongation reactions to produce glycogen. Catalyzes the reaction between ATP and alpha-D-glucose 1-phosphate (G1P) to produce pyrophosphate and ADP-Glc. The protein is Glucose-1-phosphate adenylyltransferase of Streptococcus pneumoniae (strain Hungary19A-6).